A 427-amino-acid polypeptide reads, in one-letter code: Trigger factor (427 aa).

One can recognise a PPIase FKBP-type domain in the interval 163 to 248 (GDTVVIDFVG…IHEVKAKEVP (86 aa)).

This sequence belongs to the FKBP-type PPIase family. Tig subfamily.

It is found in the cytoplasm. It catalyses the reaction [protein]-peptidylproline (omega=180) = [protein]-peptidylproline (omega=0). Functionally, involved in protein export. Acts as a chaperone by maintaining the newly synthesized protein in an open conformation. Functions as a peptidyl-prolyl cis-trans isomerase. The chain is Trigger factor from Streptococcus pneumoniae serotype 4 (strain ATCC BAA-334 / TIGR4).